Consider the following 245-residue polypeptide: tRNA pseudouridine synthase A (245 aa).

The active-site Nucleophile is the Asp-52. Tyr-110 lines the substrate pocket.

This sequence belongs to the tRNA pseudouridine synthase TruA family. As to quaternary structure, homodimer.

It catalyses the reaction uridine(38/39/40) in tRNA = pseudouridine(38/39/40) in tRNA. Its function is as follows. Formation of pseudouridine at positions 38, 39 and 40 in the anticodon stem and loop of transfer RNAs. This chain is tRNA pseudouridine synthase A, found in Borrelia hermsii (strain HS1 / DAH).